Consider the following 270-residue polypeptide: Structure-specific endonuclease subunit SLX1 (270 aa).

Positions 9–94 constitute a GIY-YIG domain; the sequence is RFFGVYLLYC…PQASRRLTHV (86 aa). Residues 182–234 form an SLX1-type zinc finger; it reads CSLCARLLQDEEGPLCCPHPGCPLRAHIICLAEEFLQEEPGQLLPLEGHCPSC.

The protein belongs to the SLX1 family. In terms of assembly, forms a heterodimer with SLX4. A divalent metal cation serves as cofactor. Expressed in testis, colon, bone marrow, brain, thymus and to a lesser extent in heart, kidney, skeletal muscle and spleen.

It localises to the nucleus. In terms of biological role, catalytic subunit of the SLX1-SLX4 structure-specific endonuclease that resolves DNA secondary structures generated during DNA repair and recombination. Has endonuclease activity towards branched DNA substrates, introducing single-strand cuts in duplex DNA close to junctions with ss-DNA. Has a preference for 5'-flap structures, and promotes symmetrical cleavage of static and migrating Holliday junctions (HJs). Resolves HJs by generating two pairs of ligatable, nicked duplex products. The chain is Structure-specific endonuclease subunit SLX1 (Slx1b) from Mus musculus (Mouse).